The sequence spans 120 residues: Alanine racemase (120 aa).

Tyr-24 (proton acceptor; specific for L-alanine) is an active-site residue.

Belongs to the alanine racemase family. In terms of assembly, homodimer. It depends on pyridoxal 5'-phosphate as a cofactor.

The enzyme catalyses L-alanine = D-alanine. Its function is as follows. Highly specific to D- and L-alanine and does not catalyze the racemization of other amino acids. The sequence is that of Alanine racemase from Penaeus monodon (Giant tiger prawn).